We begin with the raw amino-acid sequence, 472 residues long: 3-isopropylmalate dehydratase large subunit (472 aa).

3 residues coordinate [4Fe-4S] cluster: Cys-353, Cys-414, and Cys-417.

This sequence belongs to the aconitase/IPM isomerase family. LeuC type 1 subfamily. In terms of assembly, heterodimer of LeuC and LeuD. It depends on [4Fe-4S] cluster as a cofactor.

The enzyme catalyses (2R,3S)-3-isopropylmalate = (2S)-2-isopropylmalate. It functions in the pathway amino-acid biosynthesis; L-leucine biosynthesis; L-leucine from 3-methyl-2-oxobutanoate: step 2/4. Catalyzes the isomerization between 2-isopropylmalate and 3-isopropylmalate, via the formation of 2-isopropylmaleate. The chain is 3-isopropylmalate dehydratase large subunit from Psychrobacter cryohalolentis (strain ATCC BAA-1226 / DSM 17306 / VKM B-2378 / K5).